Reading from the N-terminus, the 548-residue chain is Frizzled-7-B (548 aa).

The first 18 residues, methionine 1–serine 18, serve as a signal peptide directing secretion. Topologically, residues alanine 19–tryptophan 230 are extracellular. Residues proline 31 to glutamine 150 enclose the FZ domain. 5 cysteine pairs are disulfide-bonded: cysteine 36–cysteine 97, cysteine 44–cysteine 90, cysteine 81–cysteine 118, cysteine 107–cysteine 147, and cysteine 111–cysteine 135. The N-linked (GlcNAc...) asparagine glycan is linked to asparagine 50. Asparagine 151 is a glycosylation site (N-linked (GlcNAc...) asparagine). Residues valine 231–valine 251 form a helical membrane-spanning segment. The Cytoplasmic segment spans residues aspartate 252–proline 262. The chain crosses the membrane as a helical span at residues isoleucine 263–leucine 283. Over glutamate 284–threonine 311 the chain is Extracellular. The chain crosses the membrane as a helical span at residues isoleucine 312–alanine 332. At leucine 333–glutamine 353 the chain is on the cytoplasmic side. A helical transmembrane segment spans residues tyrosine 354–glycine 374. Residues glutamine 375 to glycine 397 are Extracellular-facing. Residues phenylalanine 398–phenylalanine 418 traverse the membrane as a helical segment. Residues valine 419–arginine 444 lie on the Cytoplasmic side of the membrane. The helical transmembrane segment at isoleucine 445–tyrosine 465 threads the bilayer. Residues glutamate 466–threonine 502 lie on the Extracellular side of the membrane. A helical membrane pass occupies residues valine 503–tryptophan 523. Over serine 524–valine 548 the chain is Cytoplasmic. Positions lysine 526–tryptophan 531 match the Lys-Thr-X-X-X-Trp motif, mediates interaction with the PDZ domain of Dvl family members motif. Residues threonine 546–valine 548 carry the PDZ-binding motif.

It belongs to the G-protein coupled receptor Fz/Smo family. Interacts with wnt11 and sdc4. The extracellular domain interacts with the extracellular domain of pcdh8/papc. Interacts (via C-terminus) with dvl1 (via PDZ domain). During gastrulation, broadly expressed on the dorsal side of the embryo in deep mesodermal cells surrounding the blastopore lip and in presumptive anterior neuroectoderm. During neurulation, localized to the cranial neural crest and heart field where expression is retained at later stages in addition to new areas of expression in the neural tube, pronephros and tailbud. At tailbud stage, expressed in the pronephric duct, and broad head expression becomes more restricted to the hindbrain. In tadpoles, strongly expressed in the eye and the pericardium and myocardium of the developing heart.

It localises to the cell membrane. The protein localises to the endosome membrane. Receptor for Wnt proteins. Acts in both canonical and non-canonical Wnt pathways. Although different papers report differing Wnt preferences, wnt5a, wnt8b and wnt11 have been proposed as synergists. In the canonical Wnt pathway, acts via beta-catenin to promote the expression of the dorsal genes siamois, twin and nodal3 and to establish the dorsal axis of the embryo and induce dorsal mesoderm formation. In a non-canonical Wnt/planar cell polarity (PCP) pathway, acts with sdc4 and dvl2/dsh to regulate convergent extension cell movements during gastrulation. Triggers phosphorylation of dvl2/dsh and its translocation to the plasma membrane. In a third branch of Wnt signaling, acts in a non-canonical pathway via trimeric G proteins, and independently of dvl2/dsh, to recruit protein kinase C (PKC) to the membrane and thus activate PKC. PKC signaling controls cell sorting and tissue separation during gastrulation. This Xenopus laevis (African clawed frog) protein is Frizzled-7-B (fzd7-b).